The sequence spans 299 residues: NAD kinase 1 (299 aa).

Residue Asp62 is the Proton acceptor of the active site. NAD(+)-binding positions include 62–63, Lys67, 143–144, Lys173, and Asp175; these read DG and ND.

Belongs to the NAD kinase family. Requires a divalent metal cation as cofactor.

It is found in the cytoplasm. It catalyses the reaction NAD(+) + ATP = ADP + NADP(+) + H(+). Its function is as follows. Involved in the regulation of the intracellular balance of NAD and NADP, and is a key enzyme in the biosynthesis of NADP. Catalyzes specifically the phosphorylation on 2'-hydroxyl of the adenosine moiety of NAD to yield NADP. The sequence is that of NAD kinase 1 from Prochlorococcus marinus subsp. pastoris (strain CCMP1986 / NIES-2087 / MED4).